Reading from the N-terminus, the 412-residue chain is GATOR complex protein NPRL2 (412 aa).

Belongs to the NPR2 family. Component of the GATOR complex consisting of mio, Nup44A/Seh1, Im11, Nplr3, Nplr2, Wdr24, Wdr59 and Sec13. Within the GATOR complex, probable component of the GATOR1 subcomplex which is likely composed of Iml1, Nplr2 and Nplr3. Interacts with Nprl3.

The protein localises to the cytoplasm. Its subcellular location is the lysosome. Functionally, an essential component of the GATOR subcomplex GATOR1 which functions as an inhibitor of the amino acid-sensing branch of the TORC1 signaling pathway. The two GATOR subcomplexes, GATOR1 and GATOR2, regulate the TORC1 pathway in order to mediate metabolic homeostasis, female gametogenesis and the response to amino acid limitation and complete starvation. The function of GATOR1 in negatively regulating the TORC1 pathway is essential for maintaining baseline levels of TORC1 activity under nutrient rich conditions, and for promoting survival during amino acid or complete starvation by inhibiting TORC1-dependent cell growth and promoting catabolic metabolism and autophagy. In addition, this inhibition of TORC1 is necessary to maintain female fertility under normal conditions and during periods of nutrient stress. GATOR1 and GATOR2 act at different stages of oogenesis to regulate TORC1 in order to control meiotic entry and promote oocyte growth and development. After exactly four mitotic cyst divisions, the GATOR1 complex members (Iml1, Nprl2 and Nprl3) down-regulate TORC1 to slow cellular metabolism and promote the mitotic/meiotic transition. At later stages of oogenesis, the mio and Nup44A components of the GATOR2 complex inhibit GATOR1 and thus activate TORC1 to promote meiotic progression, and drive oocyte growth and development. This chain is GATOR complex protein NPRL2, found in Drosophila melanogaster (Fruit fly).